The following is a 227-amino-acid chain: PKHD-type hydroxylase BamMC406_4714 (227 aa).

Positions 78 to 178 (KVFPPLFNRY…RVASFFWIQS (101 aa)) constitute a Fe2OG dioxygenase domain. Residues H96, D98, and H159 each coordinate Fe cation. Residue R169 coordinates 2-oxoglutarate.

It depends on Fe(2+) as a cofactor. Requires L-ascorbate as cofactor.

The sequence is that of PKHD-type hydroxylase BamMC406_4714 from Burkholderia ambifaria (strain MC40-6).